Here is a 451-residue protein sequence, read N- to C-terminus: CCAAT/enhancer-binding protein (451 aa).

Disordered regions lie at residues 210 to 236 (TYNNHSSDENSSVGSDSSSTIKEEPID), 267 to 298 (QSNNLSNNNSSSNNSSNNSSNNSSNSNTNSTN), and 328 to 389 (LKHH…AKVR). Composition is skewed to low complexity over residues 218-228 (ENSSVGSDSSS), 268-298 (SNNLSNNNSSSNNSSNNSSNNSSNSNTNSTN), and 334-350 (LQQTQQQHAQQQQQHAQ). The segment covering 359-370 (KHVDKGTEEYRR) has biased composition (basic and acidic residues). Residues 365–428 (TEEYRRRRER…SLHKQIYMQL (64 aa)) form the bZIP domain. The tract at residues 369-398 (RRRRERNNIAVRKSREKAKVRSKEVEERVK) is basic motif. The tract at residues 400–407 (LLKEKDAL) is leucine-zipper.

Belongs to the bZIP family. C/EBP subfamily. As to quaternary structure, binds DNA as a dimer and can form stable heterodimers.

The protein resides in the nucleus. May be required for the expression of gene products mediating border cell migration. Among the DNA sequences that this protein binds with high affinity is a conserved site within the promoter of its gene. This is CCAAT/enhancer-binding protein (slbo) from Drosophila virilis (Fruit fly).